A 700-amino-acid polypeptide reads, in one-letter code: Calpain-2 catalytic subunit (700 aa).

Alanine 2 carries the post-translational modification N-acetylalanine. Positions 2–19 (AGIAIKLAKDREAAEGLG) are cleaved as a propeptide — anchors to the small subunit. Positions 45–344 (LFQDPSFPAL…YSRLEICNLT (300 aa)) constitute a Calpain catalytic domain. Isoleucine 89, glycine 91, and aspartate 96 together coordinate Ca(2+). Residue cysteine 105 is part of the active site. Residues glutamate 175, glutamine 229, and lysine 230 each contribute to the Ca(2+) site. Catalysis depends on residues histidine 262 and asparagine 286. Positions 292, 299, 319, and 323 each coordinate Ca(2+). Residues 345–514 (PDTLTCDSYK…KKADYQAVDD (170 aa)) form a domain III region. Residues 515–529 (EIEANIEEIDANEED) form a linker region. The segment at 530 to 700 (IDDGFRRLFV…LASWLSFSVL (171 aa)) is domain IV. Ca(2+)-binding residues include alanine 542, aspartate 545, glutamate 547, glutamate 552, aspartate 585, aspartate 587, serine 589, lysine 591, glutamate 596, aspartate 615, aspartate 617, serine 619, threonine 621, glutamate 626, aspartate 658, and asparagine 661. 2 consecutive EF-hand domains span residues 572-605 (FSIETCKIMVDMLDEDGSGKLGLKEFYILWTKIQ) and 602-637 (TKIQKYQKIYREIDVDRSGTMNSYEMRKALEEAGFK).

This sequence belongs to the peptidase C2 family. In terms of assembly, forms a heterodimer with a small (regulatory) subunit (CAPNS1). Interacts with CPEB3; this leads to cleavage of CPEB3. Requires Ca(2+) as cofactor. Ubiquitous.

Its subcellular location is the cytoplasm. The protein resides in the cell membrane. The catalysed reaction is Broad endopeptidase specificity.. Its activity is regulated as follows. Activated by 200-1000 micromolar concentrations of calcium and inhibited by calpastatin. Calcium-regulated non-lysosomal thiol-protease which catalyzes limited proteolysis of substrates involved in cytoskeletal remodeling and signal transduction. Proteolytically cleaves MYOC at 'Arg-226'. Proteolytically cleaves CPEB3 following neuronal stimulation which abolishes CPEB3 translational repressor activity, leading to translation of CPEB3 target mRNAs. This chain is Calpain-2 catalytic subunit (Capn2), found in Mus musculus (Mouse).